Reading from the N-terminus, the 414-residue chain is WW domain-containing oxidoreductase (414 aa).

Positions 1–24 (MAALRYAGLDDTDSEDELPPGWEE) are disordered. Thr12 carries the phosphothreonine modification. Ser14 is modified (phosphoserine). In terms of domain architecture, WW 1 spans 16 to 49 (DELPPGWEERTTKDGWVYYANHTEEKTQWEHPKT). The residue at position 33 (Tyr33) is a Phosphotyrosine. The Nuclear localization signal signature appears at 50-55 (GKRKRV). In terms of domain architecture, WW 2 spans 57–90 (GDLPYGWEQGTDENGQVFFVDHINKRTTYLDPRL). The tract at residues 125-414 (KVVVVTGANS…IQERLGSQSG (290 aa)) is interaction with MAPT. Residue 131-137 (GANSGIG) coordinates NADP(+). A mediates targeting to the mitochondria region spans residues 209 to 273 (CNAATFALPW…RFTDINDSLG (65 aa)). Position 260 (Ser260) interacts with substrate. Tyr287 is modified (phosphotyrosine; by TNK2). Tyr293 functions as the Proton acceptor in the catalytic mechanism.

Belongs to the short-chain dehydrogenases/reductases (SDR) family. As to quaternary structure, interacts with TP53, p73/TP73 and MAPK8. Interacts with MAPT/TAU, RUNX2 and HYAL2. Forms a ternary complex with TP53 and MDM2. Interacts with ERBB4, LITAF and WBP1. Interacts with DVL1, DVL2 and DVL3. May interact with FAM189B and SCOTIN. Interacts with TNK2. Interacts with TMEM207. Interacts (via WW domain) with VOPP1. Post-translationally, phosphorylated upon genotoxic stress. Phosphorylation of Tyr-33 regulates interaction with TP53, TP73 and MAPK8. May also regulate proapoptotic activity. Phosphorylation by TNK2 is associated with polyubiquitination and degradation. In terms of processing, ubiquitinated when phosphorylated by TNK2, leading to its degradation.

Its subcellular location is the cytoplasm. The protein resides in the nucleus. It localises to the mitochondrion. It is found in the golgi apparatus. The protein localises to the lysosome. Putative oxidoreductase. Acts as a tumor suppressor and plays a role in apoptosis. May function synergistically with p53/TP53 to control genotoxic stress-induced cell death. Plays a role in TGFB1 signaling and TGFB1-mediated cell death. May also play a role in tumor necrosis factor (TNF)-mediated cell death. Required for normal bone development. Inhibits Wnt signaling, probably by sequestering DVL2 in the cytoplasm. This chain is WW domain-containing oxidoreductase (WWOX), found in Pongo abelii (Sumatran orangutan).